We begin with the raw amino-acid sequence, 252 residues long: Trans-aconitate 2-methyltransferase (252 aa).

The protein belongs to the methyltransferase superfamily. Tam family.

It localises to the cytoplasm. It catalyses the reaction trans-aconitate + S-adenosyl-L-methionine = (E)-3-(methoxycarbonyl)pent-2-enedioate + S-adenosyl-L-homocysteine. Catalyzes the S-adenosylmethionine monomethyl esterification of trans-aconitate. This chain is Trans-aconitate 2-methyltransferase, found in Shigella dysenteriae serotype 1 (strain Sd197).